We begin with the raw amino-acid sequence, 173 residues long: Co-chaperone protein HscB homolog (173 aa).

The J domain maps to 5 to 77 (CHYALFDLQP…PRRARYLLAI (73 aa)).

It belongs to the HscB family. As to quaternary structure, interacts with HscA and stimulates its ATPase activity.

Its function is as follows. Co-chaperone involved in the maturation of iron-sulfur cluster-containing proteins. Seems to help targeting proteins to be folded toward HscA. The sequence is that of Co-chaperone protein HscB homolog from Pseudomonas putida (strain GB-1).